A 261-amino-acid polypeptide reads, in one-letter code: Putative [LysW]-aminoadipate/[LysW]-glutamate kinase (261 aa).

Residues 35–36 (GG), Arg62, and Asn162 each bind substrate.

Belongs to the acetylglutamate kinase family. LysZ subfamily.

It is found in the cytoplasm. The enzyme catalyses [amino-group carrier protein]-C-terminal-N-(1,4-dicarboxybutan-1-yl)-L-glutamine + ATP = [amino-group carrier protein]-C-terminal-N-(1-carboxy-5-phosphooxy-5-oxopentan-1-yl)-L-glutamine + ADP. It catalyses the reaction [amino-group carrier protein]-C-terminal-gamma-(L-glutamyl)-L-glutamate + ATP = [amino-group carrier protein]-C-terminal-gamma-(5-phospho-L-glutamyl)-L-glutamate + ADP. The protein operates within amino-acid biosynthesis; L-lysine biosynthesis via AAA pathway; L-lysine from L-alpha-aminoadipate (Thermus route): step 2/5. Its pathway is amino-acid biosynthesis; L-arginine biosynthesis. Its function is as follows. Involved in both the arginine and lysine biosynthetic pathways. Phosphorylates the LysW-bound precursors glutamate (for arginine biosynthesis), respectively alpha-aminoadipate (for lysine biosynthesis). This chain is Putative [LysW]-aminoadipate/[LysW]-glutamate kinase, found in Pyrobaculum islandicum (strain DSM 4184 / JCM 9189 / GEO3).